The primary structure comprises 540 residues: Intestinal-type alkaline phosphatase 1 (540 aa).

A signal peptide spans 1–20 (MQGDWVLLLLLGLRIHLSFG). Asp62 contacts Mg(2+). Zn(2+)-binding residues include Asp62 and Ser112. Ser112 serves as the catalytic Phosphoserine intermediate. Cys141 and Cys203 are disulfide-bonded. Asn142 is a glycosylation site (N-linked (GlcNAc...) asparagine). Mg(2+) is bound at residue Ser175. Ca(2+) contacts are provided by Glu236, Phe289, and Glu290. Residue Asn301 is glycosylated (N-linked (GlcNAc...) asparagine). Asp305 is a binding site for Ca(2+). A Mg(2+)-binding site is contributed by Glu331. Zn(2+)-binding residues include Asp336, His340, Asp377, and His378. An N-linked (GlcNAc...) asparagine glycan is attached at Asn428. Residue His452 participates in Zn(2+) binding. Cys487 and Cys494 form a disulfide bridge. Residue Asn511 is the site of GPI-anchor amidated asparagine attachment. A propeptide spans 512-540 (SAITMNNVLLSLQLLVSMLLLVGTALVVS) (removed in mature form).

This sequence belongs to the alkaline phosphatase family. Homodimer. It depends on Mg(2+) as a cofactor. The cofactor is Zn(2+). Requires Ca(2+) as cofactor.

It is found in the cell membrane. It catalyses the reaction a phosphate monoester + H2O = an alcohol + phosphate. In terms of biological role, alkaline phosphatase that can hydrolyze various phosphate compounds. This chain is Intestinal-type alkaline phosphatase 1 (Alpi), found in Rattus norvegicus (Rat).